We begin with the raw amino-acid sequence, 195 residues long: Imidazoleglycerol-phosphate dehydratase (195 aa).

It belongs to the imidazoleglycerol-phosphate dehydratase family.

Its subcellular location is the cytoplasm. The catalysed reaction is D-erythro-1-(imidazol-4-yl)glycerol 3-phosphate = 3-(imidazol-4-yl)-2-oxopropyl phosphate + H2O. Its pathway is amino-acid biosynthesis; L-histidine biosynthesis; L-histidine from 5-phospho-alpha-D-ribose 1-diphosphate: step 6/9. The protein is Imidazoleglycerol-phosphate dehydratase of Burkholderia multivorans (strain ATCC 17616 / 249).